The primary structure comprises 90 residues: DNA-directed RNA polymerase subunit omega (90 aa).

The disordered stretch occupies residues 69 to 90; it reads RQEQQEQDAAELAAVSSITHNR.

It belongs to the RNA polymerase subunit omega family. As to quaternary structure, the RNAP catalytic core consists of 2 alpha, 1 beta, 1 beta' and 1 omega subunit. When a sigma factor is associated with the core the holoenzyme is formed, which can initiate transcription.

The catalysed reaction is RNA(n) + a ribonucleoside 5'-triphosphate = RNA(n+1) + diphosphate. Promotes RNA polymerase assembly. Latches the N- and C-terminal regions of the beta' subunit thereby facilitating its interaction with the beta and alpha subunits. The chain is DNA-directed RNA polymerase subunit omega from Aliivibrio salmonicida (strain LFI1238) (Vibrio salmonicida (strain LFI1238)).